The sequence spans 491 residues: Probable folate-biopterin transporter 4 (491 aa).

The next 6 membrane-spanning stretches (helical) occupy residues 14-34 (VAFLWLVCLIYFTQGFRSFVW), 52-72 (SQFVFSVAFFPWSIKPLYGII), 84-104 (TPYLVISTVLSLVPWLVLGLD), 112-132 (LYLMIFLTVQNLGSAMADVVI), 154-174 (VSWFAMAVGGVCGSLLGGYAL), and 179-199 (IETIFLLFTVLPALQLLSCAL). The tract at residues 222–262 (KSLTSNDNYPDTSKSNTRRRKGQKKGKKGDSNGKSETQKKQ) is disordered. Polar residues predominate over residues 224–236 (LTSNDNYPDTSKS). Residues 237–248 (NTRRRKGQKKGK) are compositionally biased toward basic residues. A compositionally biased stretch (basic and acidic residues) spans 249-260 (KGDSNGKSETQK). 6 helical membrane passes run 294-314 (MAWFFIAHITVPNLSTVMFYY), 323-343 (AAFLGTARVVGWLGLMFGTFI), 356-376 (SLLFAHIGLSVTILLDMVLVS), 389-411 (MVLFGSALGDAINQLKFMPFLIL), 437-457 (TVGSFMGAGLASLLGISSGSF), and 461-481 (FMGLAIQVFCTYIPVLFLFLI).

The protein belongs to the major facilitator superfamily. Folate-biopterin transporter (TC 2.A.71) family.

The protein localises to the membrane. Could mediate folate transport. This chain is Probable folate-biopterin transporter 4, found in Arabidopsis thaliana (Mouse-ear cress).